Reading from the N-terminus, the 367-residue chain is Epoxide hydrolase 3 (367 aa).

The helical transmembrane segment at 21–41 (GVFFWVLVYVAALLAAVSYIP) threads the bilayer. Aspartate 173 serves as the catalytic Nucleophile. Tyrosine 285 acts as the Proton donor in catalysis. Histidine 340 functions as the Proton acceptor in the catalytic mechanism.

The protein belongs to the AB hydrolase superfamily. Epoxide hydrolase family.

The protein localises to the microsome membrane. The enzyme catalyses an epoxide + H2O = an ethanediol. It catalyses the reaction 9,10-epoxyoctadecanoate + H2O = 9,10-dihydroxyoctadecanoate. It carries out the reaction 9,10-epoxy-(12Z)-octadecenoate + H2O = 9,10-dihydroxy-(12Z)-octadecenoate. The catalysed reaction is 8,9-epoxy-(5Z,11Z,14Z)-eicosatrienoate + H2O = 8,9-dihydroxy-(5Z,11Z,14Z)-eicosatrienoate. The enzyme catalyses 11,12-epoxy-(5Z,8Z,14Z)-eicosatrienoate + H2O = 11,12-dihydroxy-(5Z,8Z,14Z)-eicosatrienoate. It catalyses the reaction 14,15-epoxy-(5Z,8Z,11Z)-eicosatrienoate + H2O = 14,15-dihydroxy-(5Z,8Z,11Z)-eicosatrienoate. Its activity is regulated as follows. Inhibited by 1-(1-acetylpiperidin-4-yl)-3-(4-(trifl uoromethoxy)phenyl)urea (TPAU), 1-cyclohexyl-3-dodecylurea (CDU), 12-(3-adamantan-1-yl-ureido)-dodecanoic acid (AUDA), 1-((3S, 5S, 7S)-adamantan-1-yl)-3-(5-(2-(2-ethoxyethoxy) ethoxy)pentyl)urea (AEPU) and to a lesser extent by 8-(3-((3S, 5S, 7S)-adamantan-1-yl)ureido) octanoic acid (AUOA). In terms of biological role, catalyzes the hydrolysis of epoxide-containing fatty acids. Active in vitro against epoxyeicosatrienoic acids (EETs) including 8,9-EET, 9,10-EET, 11,12-EET and 14,15-EET and leukotoxin. This is Epoxide hydrolase 3 (ephx3) from Xenopus tropicalis (Western clawed frog).